Reading from the N-terminus, the 204-residue chain is Late expression factor 2 (204 aa).

The protein belongs to the baculoviridae LEF-2 family.

In terms of biological role, required for late and very late gene expression. Specifically required for expression from the vp39 and polh promoters. The polypeptide is Late expression factor 2 (LEF-2) (Anticarsia gemmatalis nuclear polyhedrosis virus (AgMNPV)).